Reading from the N-terminus, the 567-residue chain is MIDRQRMGLWALAILTLPMYLTVTEGSKSSWGLENEALIVRCPQRGRSTYPVEWYYSDTNESIPTQKRNRIFVSRDRLKFLPARVEDSGIYACVIRSPNLNKTGYLNVTIHKKPPSCNIPDYLMYSTVRGSDKNFKITCPTIDLYNWTAPVQWFKNCKALQEPRFRAHRSYLFIDNVTHDDEGDYTCQFTHAENGTNYIVTATRSFTVEEKGFSMFPVITNPPYNHTMEVEIGKPASIACSACFGKGSHFLADVLWQINKTVVGNFGEARIQEEEGRNESSSNDMDCLTSVLRITGVTEKDLSLEYDCLALNLHGMIRHTIRLRRKQPIDHRSIYYIVAGCSLLLMFINVLVIVLKVFWIEVALFWRDIVTPYKTRNDGKLYDAYIIYPRVFRGSAAGTHSVEYFVHHTLPDVLENKCGYKLCIYGRDLLPGQDAATVVESSIQNSRRQVFVLAPHMMHSKEFAYEQEIALHSALIQNNSKVILIEMEPLGEASRLQVGDLQDSLQHLVKIQGTIKWREDHVADKQSLSSKFWKHVRYQMPVPERASKTASVAAPLSGKACLDLKHF.

Residues 1–26 (MIDRQRMGLWALAILTLPMYLTVTEG) form the signal peptide. Ig-like C2-type domains are found at residues 27-109 (SKSS…LNVT) and 120-203 (PDYL…VTAT). Topologically, residues 27–332 (SKSSWGLENE…LRRKQPIDHR (306 aa)) are extracellular. C42 and C93 are oxidised to a cystine. 6 N-linked (GlcNAc...) asparagine glycosylation sites follow: N60, N101, N107, N146, N176, and N194. Disulfide bonds link C117–C157 and C139–C187. The interval 204–216 (RSFTVEEKGFSMF) is flexible linker. The 108-residue stretch at 217–324 (PVITNPPYNH…GMIRHTIRLR (108 aa)) folds into the Ig-like C2-type 3 domain. Residues N225, N259, and N278 are each glycosylated (N-linked (GlcNAc...) asparagine). Intrachain disulfides connect C240–C308 and C243–C287. K326 participates in a covalent cross-link: Glycyl lysine isopeptide (Lys-Gly) (interchain with G-Cter in ubiquitin). Residues 333–355 (SIYYIVAGCSLLLMFINVLVIVL) form a helical membrane-spanning segment. Topologically, residues 356–567 (KVFWIEVALF…GKACLDLKHF (212 aa)) are cytoplasmic. The TIR domain maps to 380-540 (KLYDAYIIYP…KFWKHVRYQM (161 aa)). S442 bears the Phosphoserine; by GSK3-beta mark. E466 is an active-site residue.

Belongs to the interleukin-1 receptor family. In terms of assembly, interacts with MYD88, IRAK1, IRAK4, and TRAF6. Bound to its ligand IL33, interacts with IL1RAP to form the minimal interleukin-33 signaling complex with a 1:1:1 stoichiometry. Interacts with KIT (bound to KITLG/SCF). A mast cell-specific KITLG/SCF-induced interleukin-33 signaling complex contains IL1RL1, IL1RAP, KIT and MYD88. Interacts with TMED1. Phosphorylated by GSK3B at Ser-442; leading to proteasomal degradation. In terms of processing, ubiquitinated at Lys-326 in a FBXL19-mediated manner; leading to proteasomal degradation. Ubiquitination by TRAF6 via 'Lys-27'-linked polyubiquitination and deubiquitination by USP38 serves as a critical regulatory mechanism for fine-tuning IL1RL1-mediated inflammatory response. As to expression, predominantly expressed in hematopoietic tissues, and in macrophage, erythroid, epithelial and fibroblast cell lines. Isoform A is expressed in brain astrocytes and microglia. Isoform B is expressed in brain endothelial cells.

It localises to the cell membrane. It is found in the secreted. The enzyme catalyses NAD(+) + H2O = ADP-D-ribose + nicotinamide + H(+). Functionally, receptor for interleukin-33 (IL-33) which plays crucial roles in innate and adaptive immunity, contributing to tissue homeostasis and responses to environmental stresses together with coreceptor IL1RAP. Its stimulation recruits MYD88, IRAK1, IRAK4, and TRAF6, followed by phosphorylation of MAPK3/ERK1 and/or MAPK1/ERK2, MAPK14, and MAPK8. Possibly involved in helper T-cell function. Upon tissue injury, induces UCP2-dependent mitochondrial rewiring that attenuates the generation of reactive oxygen species and preserves the integrity of Krebs cycle required for persistent production of itaconate and subsequent GATA3-dependent differentiation of inflammation-resolving alternatively activated macrophages. Its function is as follows. Inhibits IL-33 signaling. The chain is Interleukin-1 receptor-like 1 (Il1rl1) from Mus musculus (Mouse).